Consider the following 360-residue polypeptide: Inward rectifier potassium channel 13 (360 aa).

Over 1–50 the chain is Cytoplasmic; it reads MDSSNCKVIAPLLSQRYRRMVTKDGHSTLQMDGAQRGLAYLRDAWGILMD. Residues 51–77 form a helical membrane-spanning segment; the sequence is MRWRWMMLVFSASFVVHWLVFAVLWYV. Residues 78–105 lie on the Extracellular side of the membrane; sequence LAEMNGDLELDHDAPPENHTICVKYITS. Residues 106-122 constitute an intramembrane region (helical; Pore-forming); it reads FTAAFSFSLETQLTIGY. A Selectivity filter motif is present at residues 119–124; it reads TIGYGT. Topologically, residues 123–131 are extracellular; that stretch reads GTMFPSGDC. The chain crosses the membrane as a helical span at residues 132 to 157; the sequence is PSAIALLAIQMLLGLMLEAFITGAFV. The Cytoplasmic portion of the chain corresponds to 158 to 360; sequence AKIARPKNRA…FQISETGLTE (203 aa). A Phosphoserine; by PKC modification is found at Ser-201. Ser-287 is modified (phosphoserine; by PKA).

Belongs to the inward rectifier-type potassium channel (TC 1.A.2.1) family. KCNJ13 subfamily. As to quaternary structure, homotetramer. Interacts with RAB28; the interaction may facilitate cone outer segments phagocytosis. Post-translationally, phosphorylation at Ser-201 by PKC strongly inhibits ionic currents, while phosphorylation at Ser-287 by PKA increases them. As to expression, predominantly expressed in small intestine. Expression is also detected in stomach, kidney, and all central nervous system regions tested with the exception of spinal cord.

It is found in the membrane. The protein localises to the cell membrane. It carries out the reaction K(+)(in) = K(+)(out). Its activity is regulated as follows. Inhibited by Ba(2+) and Cs(+), although sensitivity to those inhibitors is much lower than in other Kir channels. Inward rectifier potassium channels are characterized by a greater tendency to allow potassium to flow into the cell rather than out of it. Their voltage dependence is regulated by the concentration of extracellular potassium; as external potassium is raised, the voltage range of the channel opening shifts to more positive voltages. The inward rectification is mainly due to the blockage of outward current by internal magnesium. KCNJ13 has a very low single channel conductance, low sensitivity to block by external barium and cesium, and no dependence of its inward rectification properties on the internal blocking particle magnesium. This Homo sapiens (Human) protein is Inward rectifier potassium channel 13 (KCNJ13).